We begin with the raw amino-acid sequence, 127 residues long: Small ribosomal subunit protein uS12 (127 aa).

Aspartate 89 is subject to 3-methylthioaspartic acid.

The protein belongs to the universal ribosomal protein uS12 family. In terms of assembly, part of the 30S ribosomal subunit. Contacts proteins S8 and S17. May interact with IF1 in the 30S initiation complex.

In terms of biological role, with S4 and S5 plays an important role in translational accuracy. Its function is as follows. Interacts with and stabilizes bases of the 16S rRNA that are involved in tRNA selection in the A site and with the mRNA backbone. Located at the interface of the 30S and 50S subunits, it traverses the body of the 30S subunit contacting proteins on the other side and probably holding the rRNA structure together. The combined cluster of proteins S8, S12 and S17 appears to hold together the shoulder and platform of the 30S subunit. This Campylobacter fetus subsp. fetus (strain 82-40) protein is Small ribosomal subunit protein uS12.